The chain runs to 283 residues: Probable replication-associated protein repA1 (283 aa).

It belongs to the IncFII RepA family.

In terms of biological role, this protein is essential for plasmid replication; it is involved in copy control functions. The polypeptide is Probable replication-associated protein repA1 (repA1) (Buchnera aphidicola subsp. Schizaphis graminum (strain Sg)).